The following is a 232-amino-acid chain: uncharacterized protein (232 aa).

The chain crosses the membrane as a helical span at residues 10 to 32; sequence GLTIYLYPVIAWIILVTKIESGL.

It is found in the membrane. This is an uncharacterized protein from Archaeoglobus fulgidus (strain ATCC 49558 / DSM 4304 / JCM 9628 / NBRC 100126 / VC-16).